We begin with the raw amino-acid sequence, 480 residues long: Type VI lipase adapter protein Tla3 (480 aa).

The tract at residues 410-458 (ISSPTPGKKPVHDPFGVDLLPQTASGDGPPPSADPVAPASRLTTRLPPG) is disordered.

Interacts with the Tle3 toxin on one side and with the H2-T6SS component VgrG2b on the other side.

It is found in the cytoplasm. Adapter protein that targets and loads the Tle3 toxin onto the H2 type VI secretion system (H2-T6SS) machinery through an interaction with the TTR domain of VgrG2b. Seems specific for Tle3. This chain is Type VI lipase adapter protein Tla3, found in Pseudomonas aeruginosa (strain ATCC 15692 / DSM 22644 / CIP 104116 / JCM 14847 / LMG 12228 / 1C / PRS 101 / PAO1).